The chain runs to 741 residues: IPGAFYIKNFMQVEFYLKSLTLEDIPNHGTIHFICNSWIYNSKVYKSDRIFFANNTYLPSETPAPLLKYREEELKNVRGDGSGERKEWDRVYDYDVYNDLGNPDKGAALARPVLGGSTLPYPRRGRTGRPKTKKDPNSEKPSDFVYLPRDEAFGHLKSSDFLAYGLKSVSQDVLPVLTDAFDGNLLSLEFDNFAEVHKLYEGGVTLPTNFLSKYAPIPIVKEIFRSDGEQFLKYPPPKVMQVNKSAWMTDEEFARETIAGVNPNVIKSLEEFPPRSKLDTQSFGDHTSIITKEHLEINLGGLTVEQAIQSKKLFILDHHDYLIPYLRRINASATKTYATRTIFFLKSDGTLAPLAIELSKPHPQGDEHGPVSEVYVPAYEGVEAYIWLLAKAYVVVNDSCYHQLVSHWLNTHAVVEPFVLATNRQLSVVHPVYKLLFPHYRDTMNINSLARKSLVNADGIIEKTFLWGRYALELSAVIYKDWSLHDQALPNDLVKRGVAVKDPSAPHGVKLVIEDYPYASDGLEIWDAIKSWVVEYVAFYYKSDEVLQQDSELQAWWKELVQVGHGDLKDKPWWPKMQSRENLVEVSTTLIWIASALHAAVNFGQYPYGGLILNRPTISRRFMPEKGSAEYAALAKNPEKEFLKTITGKKETLIDLTVIEILSRHASDEIYLGERDGGDHWTSDAGPLEAFKRFGKKLAEIEKKLVQKNNDETLRNRTGPAKMPYTLLYPSSEEGLTFRGI.

In terms of domain architecture, PLAT spans I1–A53. The Lipoxygenase domain occupies T56–I741. The segment at A108–F144 is disordered. Basic residues predominate over residues R123–T132. Over residues K133–F144 the composition is skewed to basic and acidic residues. Residues H407, H412, H598, and N602 each contribute to the Fe cation site.

Belongs to the lipoxygenase family. As to quaternary structure, monomer. Fe cation is required as a cofactor.

It is found in the cytoplasm. It catalyses the reaction (9Z,12Z)-octadecadienoate + O2 = (9S)-hydroperoxy-(10E,12Z)-octadecadienoate. The enzyme catalyses (9Z,12Z)-octadecadienoate + O2 = (13S)-hydroperoxy-(9Z,11E)-octadecadienoate. It carries out the reaction (9Z,12Z,15Z)-octadecatrienoate + O2 = (13S)-hydroperoxy-(9Z,11E,15Z)-octadecatrienoate. It participates in lipid metabolism; oxylipin biosynthesis. Plant lipoxygenase may be involved in a number of diverse aspects of plant physiology including growth and development, pest resistance, and senescence or responses to wounding. It catalyzes the hydroperoxidation of lipids containing a cis,cis-1,4-pentadiene structure. This chain is Linoleate 9S-lipoxygenase, found in Phaseolus vulgaris (Kidney bean).